Here is a 256-residue protein sequence, read N- to C-terminus: Ribosomal RNA small subunit methyltransferase A (256 aa).

Residues Asn-12, Leu-14, Gly-39, Glu-60, Asp-85, and Asn-103 each contribute to the S-adenosyl-L-methionine site.

It belongs to the class I-like SAM-binding methyltransferase superfamily. rRNA adenine N(6)-methyltransferase family. RsmA subfamily.

Its subcellular location is the cytoplasm. The enzyme catalyses adenosine(1518)/adenosine(1519) in 16S rRNA + 4 S-adenosyl-L-methionine = N(6)-dimethyladenosine(1518)/N(6)-dimethyladenosine(1519) in 16S rRNA + 4 S-adenosyl-L-homocysteine + 4 H(+). Specifically dimethylates two adjacent adenosines (A1518 and A1519) in the loop of a conserved hairpin near the 3'-end of 16S rRNA in the 30S particle. May play a critical role in biogenesis of 30S subunits. This Legionella pneumophila (strain Corby) protein is Ribosomal RNA small subunit methyltransferase A.